Reading from the N-terminus, the 120-residue chain is Large ribosomal subunit protein bL12 (120 aa).

Belongs to the bacterial ribosomal protein bL12 family. In terms of assembly, homodimer. Part of the ribosomal stalk of the 50S ribosomal subunit. Forms a multimeric L10(L12)X complex, where L10 forms an elongated spine to which 2 to 4 L12 dimers bind in a sequential fashion. Binds GTP-bound translation factors.

Functionally, forms part of the ribosomal stalk which helps the ribosome interact with GTP-bound translation factors. Is thus essential for accurate translation. This is Large ribosomal subunit protein bL12 from Lachnoclostridium phytofermentans (strain ATCC 700394 / DSM 18823 / ISDg) (Clostridium phytofermentans).